The following is a 309-amino-acid chain: Ecotin-like protein 3 (309 aa).

The tract at residues 140-309 (QQELEAPAVS…KSGRDSRRNS (170 aa)) is disordered. The segment covering 156 to 167 (VRERQNNPEGHA) has biased composition (basic and acidic residues). The segment covering 168–180 (HPVVVHSVESPEV) has biased composition (low complexity). The segment covering 181–190 (SGHKDGDQPM) has biased composition (basic and acidic residues). Positions 196 to 205 (LKQSCSNSSR) are enriched in low complexity. A compositionally biased stretch (polar residues) spans 209 to 221 (HSASGSSPKNTPL). Residues 261–279 (SDSTSSRKDDQDSGYEKKV) are compositionally biased toward basic and acidic residues. A compositionally biased stretch (low complexity) spans 290–299 (SSPKRSASPK).

This sequence belongs to the protease inhibitor I11 (ecotin) family.

In Leishmania braziliensis, this protein is Ecotin-like protein 3.